The sequence spans 327 residues: Aspartate--ammonia ligase (327 aa).

The protein belongs to the class-II aminoacyl-tRNA synthetase family. AsnA subfamily.

The protein localises to the cytoplasm. It carries out the reaction L-aspartate + NH4(+) + ATP = L-asparagine + AMP + diphosphate + H(+). It participates in amino-acid biosynthesis; L-asparagine biosynthesis; L-asparagine from L-aspartate (ammonia route): step 1/1. In Bacillus cereus (strain G9842), this protein is Aspartate--ammonia ligase.